The primary structure comprises 553 residues: HTH-type transcriptional regulator SgrR (553 aa).

Residues 1–117 (MPSSRLQQQF…LSQIERRFRQ (117 aa)) form the HTH marR-type domain. The segment at residues 26–49 (LQELANVLHCSKRHIRSLLNNMQK) is a DNA-binding region (H-T-H motif). Residues 163–494 (EPEADLAHHW…NDLSKEVSQW (332 aa)) are solute-binding.

Functionally, activates the small RNA gene sgrS under glucose-phosphate stress conditions as well as yfdZ. Represses its own transcription under both stress and non-stress conditions. Might act as a sensor of the intracellular accumulation of phosphoglucose by binding these molecules in its C-terminal solute-binding domain. The polypeptide is HTH-type transcriptional regulator SgrR (Photorhabdus laumondii subsp. laumondii (strain DSM 15139 / CIP 105565 / TT01) (Photorhabdus luminescens subsp. laumondii)).